Consider the following 171-residue polypeptide: Protein BTG1 (171 aa).

Ser159 carries the phosphoserine modification.

The protein belongs to the BTG family. As to quaternary structure, interacts with CNOT7 and CNOT8.

In terms of biological role, anti-proliferative protein. This is Protein BTG1 (BTG1) from Bos taurus (Bovine).